Consider the following 131-residue polypeptide: Protein FON2 SPARE1 (131 aa).

The first 22 residues, 1 to 22 (MSRRLGAAAAVLLLWLAVLTFA), serve as a signal peptide directing secretion. The segment at 67-131 (SPSSLTTTDR…VPTGPNPLHH (65 aa)) is disordered. Residues 76–97 (RHHHHHRHHGHHHHRGHDRWNR) show a composition bias toward basic residues.

The protein belongs to the CLV3/ESR signal peptide family. In terms of tissue distribution, expressed in all aerial apical meristems, including the floral and inflorescence meristems in the reproductive phase and the shoot apical meristem in the vegetative phase. Also detected in the primordia of lateral organs such as the leaf and the floral organs.

The protein resides in the secreted. Its function is as follows. Involved in the maintenance of the floral meristem and of the shoot apical meristem in the vegetative phase. Suppresses the fon2 mutation and acts independently of FON1. In Oryza sativa subsp. japonica, the protein has a single amino acid substitution at the putative processing site of the signal peptide and is inactive. This Oryza sativa subsp. indica (Rice) protein is Protein FON2 SPARE1 (FOS1).